The sequence spans 77 residues: U10-lycotoxin-Ls1a (77 aa).

Residues 1–20 (MKLIIFTGLVLFAIVSLIEA) form the signal peptide. The propeptide occupies 21 to 26 (EEESGR).

The protein belongs to the neurotoxin 19 (CSTX) family. 09 (U10-Lctx) subfamily. Contains 4 disulfide bonds. As to expression, expressed by the venom gland.

Its subcellular location is the secreted. The chain is U10-lycotoxin-Ls1a from Lycosa singoriensis (Wolf spider).